A 178-amino-acid polypeptide reads, in one-letter code: ATP synthase subunit delta (178 aa).

Belongs to the ATPase delta chain family. F-type ATPases have 2 components, F(1) - the catalytic core - and F(0) - the membrane proton channel. F(1) has five subunits: alpha(3), beta(3), gamma(1), delta(1), epsilon(1). F(0) has three main subunits: a(1), b(2) and c(10-14). The alpha and beta chains form an alternating ring which encloses part of the gamma chain. F(1) is attached to F(0) by a central stalk formed by the gamma and epsilon chains, while a peripheral stalk is formed by the delta and b chains.

It is found in the cell inner membrane. F(1)F(0) ATP synthase produces ATP from ADP in the presence of a proton or sodium gradient. F-type ATPases consist of two structural domains, F(1) containing the extramembraneous catalytic core and F(0) containing the membrane proton channel, linked together by a central stalk and a peripheral stalk. During catalysis, ATP synthesis in the catalytic domain of F(1) is coupled via a rotary mechanism of the central stalk subunits to proton translocation. Functionally, this protein is part of the stalk that links CF(0) to CF(1). It either transmits conformational changes from CF(0) to CF(1) or is implicated in proton conduction. The chain is ATP synthase subunit delta from Teredinibacter turnerae (strain ATCC 39867 / T7901).